The sequence spans 475 residues: Glutamyl-tRNA(Gln) amidotransferase subunit A (475 aa).

Residues lysine 69 and serine 144 each act as charge relay system in the active site. Serine 168 acts as the Acyl-ester intermediate in catalysis.

It belongs to the amidase family. GatA subfamily. Heterotrimer of A, B and C subunits.

The catalysed reaction is L-glutamyl-tRNA(Gln) + L-glutamine + ATP + H2O = L-glutaminyl-tRNA(Gln) + L-glutamate + ADP + phosphate + H(+). Allows the formation of correctly charged Gln-tRNA(Gln) through the transamidation of misacylated Glu-tRNA(Gln) in organisms which lack glutaminyl-tRNA synthetase. The reaction takes place in the presence of glutamine and ATP through an activated gamma-phospho-Glu-tRNA(Gln). The sequence is that of Glutamyl-tRNA(Gln) amidotransferase subunit A from Methanosarcina barkeri (strain Fusaro / DSM 804).